A 378-amino-acid polypeptide reads, in one-letter code: GTP 3',8-cyclase 3 (378 aa).

The Radical SAM core domain maps to 40–259; sequence RCGRTMGDLR…STLGKKYGPI (220 aa). Residue arginine 49 participates in GTP binding. [4Fe-4S] cluster is bound by residues cysteine 56 and cysteine 60. Tyrosine 62 serves as a coordination point for S-adenosyl-L-methionine. A [4Fe-4S] cluster-binding site is contributed by cysteine 63. Arginine 99 provides a ligand contact to GTP. Position 103 (glycine 103) interacts with S-adenosyl-L-methionine. GTP is bound at residue threonine 134. Serine 158 serves as a coordination point for S-adenosyl-L-methionine. A GTP-binding site is contributed by lysine 195. Methionine 229 serves as a coordination point for S-adenosyl-L-methionine. Residues cysteine 292 and cysteine 295 each contribute to the [4Fe-4S] cluster site. 297-299 contributes to the GTP binding site; it reads RSR. Residue cysteine 309 participates in [4Fe-4S] cluster binding.

It belongs to the radical SAM superfamily. MoaA family. Monomer and homodimer. [4Fe-4S] cluster serves as cofactor.

The catalysed reaction is GTP + AH2 + S-adenosyl-L-methionine = (8S)-3',8-cyclo-7,8-dihydroguanosine 5'-triphosphate + 5'-deoxyadenosine + L-methionine + A + H(+). The protein operates within cofactor biosynthesis; molybdopterin biosynthesis. Catalyzes the cyclization of GTP to (8S)-3',8-cyclo-7,8-dihydroguanosine 5'-triphosphate. This is GTP 3',8-cyclase 3 from Mycobacterium bovis (strain ATCC BAA-935 / AF2122/97).